Reading from the N-terminus, the 376-residue chain is MLASYASDPLKSRGRLYKEIPNTYRNEFERDRDRIIHTNAFRRLQYKTQVFINHEGDHYRNRLTHSLEVSAVARSVANTLNLSSDLAETIALAHDLGHTPFGHAGERALNACMRDYNGFSHNAQSLKILTLLEKRYAAYNGVNLTWEVLEGIVKHNGPITCEINEYIAEYNKQNDLELDTYASAEAQIAALADDISYISHDLEDSIGAKIIDFNSLAELKYIDQYVFALKSKFKNISSSCLIYEVVRKLMHELITDLLWQTKENLNKEKITDIDEIRNLNYQLVDFTANTNERIKETKKFLHERVYKSNKITAISLKCTKIVQGLFKVYMDDINLLPVNWKMLIDSNEIYSKARVIADYIAGMTDRFAIQAYNQLC.

An HD domain is found at 62–198 (RLTHSLEVSA…AALADDISYI (137 aa)).

The protein belongs to the dGTPase family. Type 2 subfamily.

This chain is Deoxyguanosinetriphosphate triphosphohydrolase-like protein, found in Rickettsia canadensis (strain McKiel).